The following is a 348-amino-acid chain: UDP-glucose 4-epimerase (348 aa).

NAD(+) is bound by residues 12 to 14 (GYI), 33 to 37 (DNFHN), 66 to 67 (DI), F88, and K92. 132–134 (SAT) lines the substrate pocket. Y157 acts as the Proton acceptor in catalysis. Positions 161 and 185 each coordinate NAD(+). Substrate is bound by residues 185 to 187 (YFN), 206 to 208 (NNL), 224 to 226 (NVF), R239, and 300 to 303 (REGD).

Belongs to the NAD(P)-dependent epimerase/dehydratase family. Homodimer. Requires NAD(+) as cofactor.

The catalysed reaction is UDP-alpha-D-glucose = UDP-alpha-D-galactose. It carries out the reaction UDP-N-acetyl-alpha-D-glucosamine = UDP-N-acetyl-alpha-D-galactosamine. Its pathway is carbohydrate metabolism; galactose metabolism. Its function is as follows. Catalyzes two distinct but analogous reactions: the reversible epimerization of UDP-glucose to UDP-galactose and the reversible epimerization of UDP-N-acetylglucosamine to UDP-N-acetylgalactosamine. The reaction with UDP-Gal plays a critical role in the Leloir pathway of galactose catabolism in which galactose is converted to the glycolytic intermediate glucose 6-phosphate. It contributes to the catabolism of dietary galactose and enables the endogenous biosynthesis of both UDP-Gal and UDP-GalNAc when exogenous sources are limited. Both UDP-sugar interconversions are important in the synthesis of glycoproteins and glycolipids. The sequence is that of UDP-glucose 4-epimerase (GALE) from Pongo abelii (Sumatran orangutan).